Consider the following 269-residue polypeptide: Shikimate dehydrogenase (NADP(+)) (269 aa).

Shikimate-binding positions include 14 to 16 (SLS) and threonine 61. The Proton acceptor role is filled by lysine 65. Glutamate 76 serves as a coordination point for NADP(+). Shikimate is bound by residues asparagine 85 and aspartate 99. NADP(+) contacts are provided by residues 123-127 (GAGGA), 146-151 (NRTPER), and isoleucine 209. Residue tyrosine 211 participates in shikimate binding. Residue glycine 231 participates in NADP(+) binding.

This sequence belongs to the shikimate dehydrogenase family. In terms of assembly, homodimer.

It carries out the reaction shikimate + NADP(+) = 3-dehydroshikimate + NADPH + H(+). Its pathway is metabolic intermediate biosynthesis; chorismate biosynthesis; chorismate from D-erythrose 4-phosphate and phosphoenolpyruvate: step 4/7. Its function is as follows. Involved in the biosynthesis of the chorismate, which leads to the biosynthesis of aromatic amino acids. Catalyzes the reversible NADPH linked reduction of 3-dehydroshikimate (DHSA) to yield shikimate (SA). The polypeptide is Shikimate dehydrogenase (NADP(+)) (Methanothrix thermoacetophila (strain DSM 6194 / JCM 14653 / NBRC 101360 / PT) (Methanosaeta thermophila)).